A 543-amino-acid polypeptide reads, in one-letter code: Carboxypeptidase Y homolog A (543 aa).

The signal sequence occupies residues 1 to 17 (MRVLPATLLVGAATAAV). Residues 18–124 (PPFQQILGLP…KLEAYDLRVK (107 aa)) constitute a propeptide that is removed on maturation. Cystine bridges form between Cys179–Cys419, Cys313–Cys327, Cys337–Cys360, Cys344–Cys353, and Cys382–Cys389. Asn210 carries N-linked (GlcNAc...) asparagine glycosylation. Residue Ser266 is part of the active site. Residue Asp458 is part of the active site. Asn509 carries N-linked (GlcNAc...) asparagine glycosylation. Residue His520 is part of the active site.

This sequence belongs to the peptidase S10 family.

The protein resides in the vacuole. The enzyme catalyses Release of a C-terminal amino acid with broad specificity.. In terms of biological role, vacuolar carboxypeptidase involved in degradation of small peptides. Digests preferentially peptides containing an aliphatic or hydrophobic residue in P1' position, as well as methionine, leucine or phenylalanine in P1 position of ester substrate. The chain is Carboxypeptidase Y homolog A (cpyA) from Aspergillus clavatus (strain ATCC 1007 / CBS 513.65 / DSM 816 / NCTC 3887 / NRRL 1 / QM 1276 / 107).